Consider the following 178-residue polypeptide: Ribosome maturation factor RimM (178 aa).

In terms of domain architecture, PRC barrel spans 100-178 (DEGEFYWHQL…EIRVDWDADF (79 aa)).

It belongs to the RimM family. In terms of assembly, binds ribosomal protein uS19.

It is found in the cytoplasm. Its function is as follows. An accessory protein needed during the final step in the assembly of 30S ribosomal subunit, possibly for assembly of the head region. Essential for efficient processing of 16S rRNA. May be needed both before and after RbfA during the maturation of 16S rRNA. It has affinity for free ribosomal 30S subunits but not for 70S ribosomes. The sequence is that of Ribosome maturation factor RimM from Azotobacter vinelandii (strain DJ / ATCC BAA-1303).